Here is a 324-residue protein sequence, read N- to C-terminus: Malate dehydrogenase (324 aa).

NAD(+) is bound by residues Gly-20–Gly-25 and Asp-44. Substrate is bound by residues Arg-93 and Arg-99. Residues Asn-106 and Val-129–Asn-131 each bind NAD(+). The substrate site is built by Asn-131 and Arg-162. His-186 acts as the Proton acceptor in catalysis.

Belongs to the LDH/MDH superfamily. MDH type 3 family.

The enzyme catalyses (S)-malate + NAD(+) = oxaloacetate + NADH + H(+). Its function is as follows. Catalyzes the reversible oxidation of malate to oxaloacetate. The polypeptide is Malate dehydrogenase (Synechocystis sp. (strain ATCC 27184 / PCC 6803 / Kazusa)).